Here is a 324-residue protein sequence, read N- to C-terminus: Beta-ketoacyl-[acyl-carrier-protein] synthase III (324 aa).

Catalysis depends on residues cysteine 112 and histidine 249. The ACP-binding stretch occupies residues 250-254 (QANRR). Asparagine 279 is a catalytic residue.

Belongs to the thiolase-like superfamily. FabH family. As to quaternary structure, homodimer.

It localises to the cytoplasm. The catalysed reaction is malonyl-[ACP] + acetyl-CoA + H(+) = 3-oxobutanoyl-[ACP] + CO2 + CoA. It participates in lipid metabolism; fatty acid biosynthesis. Functionally, catalyzes the condensation reaction of fatty acid synthesis by the addition to an acyl acceptor of two carbons from malonyl-ACP. Catalyzes the first condensation reaction which initiates fatty acid synthesis and may therefore play a role in governing the total rate of fatty acid production. Possesses both acetoacetyl-ACP synthase and acetyl transacylase activities. Its substrate specificity determines the biosynthesis of branched-chain and/or straight-chain of fatty acids. The chain is Beta-ketoacyl-[acyl-carrier-protein] synthase III from Streptococcus pyogenes serotype M2 (strain MGAS10270).